The chain runs to 409 residues: N-acetylglucosamine-6-phosphate deacetylase (409 aa).

Glu-143 contributes to the a divalent metal cation binding site. 154 to 155 is a binding site for substrate; it reads AH. Positions 211 and 232 each coordinate a divalent metal cation. Substrate is bound by residues 235 to 236, Arg-243, and 269 to 272; these read NA and DGIH. The active-site Proton donor/acceptor is the Asp-294. 328–330 is a substrate binding site; that stretch reads LSG.

This sequence belongs to the metallo-dependent hydrolases superfamily. NagA family. A divalent metal cation is required as a cofactor.

It catalyses the reaction N-acetyl-D-glucosamine 6-phosphate + H2O = D-glucosamine 6-phosphate + acetate. It participates in amino-sugar metabolism; N-acetylneuraminate degradation. Its function is as follows. Hydrolyzes the N-glycolyl group from N-glycolylglucosamine 6-phosphate (GlcNGc-6-P) in the N-glycolylneuraminic acid (Neu5Gc) degradation pathway. The polypeptide is N-acetylglucosamine-6-phosphate deacetylase (Amdhd2) (Rattus norvegicus (Rat)).